Consider the following 613-residue polypeptide: RNA polymerase-associated protein RTF1 homolog (613 aa).

2 disordered regions span residues 1–90 (MSSS…DKAR) and 121–247 (QQLA…KDKI). Positions 55-68 (PAKKKTLTKRKRRA) are enriched in basic residues. Over residues 72–81 (SDDDQVDDDL) the composition is skewed to acidic residues. Residues 167–176 (AAFHRPSDIN) are compositionally biased toward basic and acidic residues. Positions 175–209 (INRKHKEKNAMDALKNKRKEIEKKNAKNEALSIDA) form a coiled coil. The span at 215–235 (SGSSSSSSSSESSRSSSSSRE) shows a compositional bias: low complexity. Basic and acidic residues predominate over residues 236–247 (SSPERVSEKDKI). The region spanning 252–383 (VDGLSELRRA…KKQDIEKAIN (132 aa)) is the Plus3 domain. Residues 425 to 462 (RGDIREAEQIQTKIDEIERQADELEKERSKSISAIAFI) are a coiled coil. Disordered regions lie at residues 485–549 (SQDD…KTDI) and 564–613 (LKDF…SSAV). Residues 510–521 (TLSASSSTTNLS) are compositionally biased toward low complexity. The segment covering 569-586 (TPESSGNKRPSISSSKGV) has biased composition (polar residues). Positions 602–613 (GSSTSAAPSSAV) are enriched in low complexity.

In terms of assembly, component of the PAF1 complex which consists of at least cdc-73, ctr-9, leo-1, pafo-1 and rtfo-1.

The protein localises to the nucleus. In terms of biological role, component of the PAF1 complex which is a multifunctional complex involved in transcription initiation via genetic interactions with TATA-binding proteins, elongation and transcription-coupled histone modification. In Caenorhabditis elegans, this protein is RNA polymerase-associated protein RTF1 homolog.